The following is a 103-amino-acid chain: NAD(P)H-quinone oxidoreductase subunit 4L (103 aa).

Transmembrane regions (helical) follow at residues 5-25, 32-52, and 66-86; these read LQYC…GLIT, VLMS…GFSN, and IFVI…VLAI.

Belongs to the complex I subunit 4L family. As to quaternary structure, NDH-1 can be composed of about 15 different subunits; different subcomplexes with different compositions have been identified which probably have different functions.

Its subcellular location is the cellular thylakoid membrane. It carries out the reaction a plastoquinone + NADH + (n+1) H(+)(in) = a plastoquinol + NAD(+) + n H(+)(out). The catalysed reaction is a plastoquinone + NADPH + (n+1) H(+)(in) = a plastoquinol + NADP(+) + n H(+)(out). Functionally, NDH-1 shuttles electrons from an unknown electron donor, via FMN and iron-sulfur (Fe-S) centers, to quinones in the respiratory and/or the photosynthetic chain. The immediate electron acceptor for the enzyme in this species is believed to be plastoquinone. Couples the redox reaction to proton translocation, and thus conserves the redox energy in a proton gradient. Cyanobacterial NDH-1 also plays a role in inorganic carbon-concentration. This is NAD(P)H-quinone oxidoreductase subunit 4L from Synechocystis sp. (strain ATCC 27184 / PCC 6803 / Kazusa).